The following is a 336-amino-acid chain: N-acetyl-gamma-glutamyl-phosphate reductase (336 aa).

Cysteine 144 is an active-site residue.

Belongs to the NAGSA dehydrogenase family. Type 1 subfamily.

The protein resides in the cytoplasm. It catalyses the reaction N-acetyl-L-glutamate 5-semialdehyde + phosphate + NADP(+) = N-acetyl-L-glutamyl 5-phosphate + NADPH + H(+). The protein operates within amino-acid biosynthesis; L-arginine biosynthesis; N(2)-acetyl-L-ornithine from L-glutamate: step 3/4. Catalyzes the NADPH-dependent reduction of N-acetyl-5-glutamyl phosphate to yield N-acetyl-L-glutamate 5-semialdehyde. This chain is N-acetyl-gamma-glutamyl-phosphate reductase, found in Methanosarcina acetivorans (strain ATCC 35395 / DSM 2834 / JCM 12185 / C2A).